A 113-amino-acid polypeptide reads, in one-letter code: Inner membrane protein YiaB (113 aa).

Topologically, residues 1–9 (MKTSKTVAK) are cytoplasmic. A helical membrane pass occupies residues 10–20 (LLFVVGALVYL). Residues 21 to 33 (VGLWISCPLLSGK) lie on the Periplasmic side of the membrane. Residues 34–51 (GYFLGVLMTATFGNYAYL) form a helical membrane-spanning segment. Topologically, residues 52–61 (RAEKLGQLDD) are cytoplasmic. A helical membrane pass occupies residues 62–82 (FFTHICQLVALITIGLLFIGV). Over 83 to 84 (LN) the chain is Periplasmic. The chain crosses the membrane as a helical span at residues 85 to 105 (APINTYEMVIYPIAFFVCLFG). Residues 106 to 113 (QMRLFRSA) lie on the Cytoplasmic side of the membrane.

Its subcellular location is the cell inner membrane. This is Inner membrane protein YiaB (yiaB) from Escherichia coli (strain K12).